We begin with the raw amino-acid sequence, 377 residues long: Adenosine 3'-phospho 5'-phosphosulfate transporter 2 (377 aa).

10 helical membrane-spanning segments follow: residues 50-70, 77-97, 115-135, 138-158, 164-184, 195-215, 228-248, 266-286, 293-313, and 317-337; these read LCCG…ELIF, PYGW…GYIE, ALLA…VGYL, PTQV…SVLI, GPMD…FTLA, FGVF…NVQE, VVIY…LLSG, GYAF…LTLV, LAAT…FVFF, and FTIQ…LNVY.

Belongs to the nucleotide-sugar transporter family. SLC35B subfamily.

The protein localises to the golgi apparatus membrane. In terms of biological role, mediates the transport of adenosine 3'-phospho 5'-phosphosulfate (PAPS), from cytosol into Golgi. PAPS is a universal sulfuryl donor for sulfation events that take place in the Golgi. Essential for viability. Involved in glycosaminoglycan synthesis and the subsequent signaling. May be involved in hh and dpp signaling by controlling the sulfation of heparan sulfate (HS). This chain is Adenosine 3'-phospho 5'-phosphosulfate transporter 2, found in Anopheles gambiae (African malaria mosquito).